The chain runs to 146 residues: Large ribosomal subunit protein uL15 (146 aa).

Positions 1–13 (MKLHELKPAEGSR) are enriched in basic and acidic residues. A disordered region spans residues 1-51 (MKLHELKPAEGSRKVRNRVGRGIGSGNGKTAGKGHKGQNARSGGGVRLGFE). 2 stretches are compositionally biased toward gly residues: residues 21-31 (RGIGSGNGKTA) and 42-51 (SGGGVRLGFE).

The protein belongs to the universal ribosomal protein uL15 family. Part of the 50S ribosomal subunit.

Binds to the 23S rRNA. This Bacillus cereus (strain G9842) protein is Large ribosomal subunit protein uL15.